A 510-amino-acid chain; its full sequence is Rab proteins geranylgeranyltransferase component A 1 (510 aa).

It belongs to the Rab GDI family. May interact with rab-5, rab-7 and rab-11. Does not interact with rab-3, rab-27 and rab-10. As to expression, expressed in several neurons including head neurons, motor neurons located in the ventral nerve cord, HSN and CAN neurons, and tail neurons, and in muscles such as body-wall, pharyngeal, intestinal and anal sphincter. Also expressed in seam cells, the hypodermis and the intestine.

It localises to the cytoplasm. Functionally, substrate-binding subunit of the Rab geranylgeranyltransferase (GGTase) complex. Binds unprenylated Rab proteins and presents the substrate peptide to the catalytic component B and remains bound to it after the geranylgeranyl transfer reaction. The component A is thought to be regenerated by transferring its prenylated Rab back to the donor membrane. Plays a role in neurotransmitter release from presynaptic terminals at neuromuscular junctions. Positively regulates the function of rab-27 in synaptic transmission most likely through mediating rab-27 prenylation. In Caenorhabditis elegans, this protein is Rab proteins geranylgeranyltransferase component A 1.